A 957-amino-acid chain; its full sequence is Isoleucine--tRNA ligase (957 aa).

The 'HIGH' region motif lies at 57–67 (PYANGDIHIGH). E594 provides a ligand contact to L-isoleucyl-5'-AMP. The 'KMSKS' region motif lies at 635–639 (KMSKS). Position 638 (K638) interacts with ATP. Zn(2+) contacts are provided by C920, C923, C940, and C943.

It belongs to the class-I aminoacyl-tRNA synthetase family. IleS type 1 subfamily. In terms of assembly, monomer. It depends on Zn(2+) as a cofactor.

The protein resides in the cytoplasm. The catalysed reaction is tRNA(Ile) + L-isoleucine + ATP = L-isoleucyl-tRNA(Ile) + AMP + diphosphate. In terms of biological role, catalyzes the attachment of isoleucine to tRNA(Ile). As IleRS can inadvertently accommodate and process structurally similar amino acids such as valine, to avoid such errors it has two additional distinct tRNA(Ile)-dependent editing activities. One activity is designated as 'pretransfer' editing and involves the hydrolysis of activated Val-AMP. The other activity is designated 'posttransfer' editing and involves deacylation of mischarged Val-tRNA(Ile). The protein is Isoleucine--tRNA ligase of Laribacter hongkongensis (strain HLHK9).